The following is a 495-amino-acid chain: Tyrosine 3-monooxygenase (495 aa).

The residue at position 19 (Ser19) is a Phosphoserine; by CaMK2. Ser31 is modified (phosphoserine). At Ser40 the chain carries Phosphoserine; by CaMK2 and PKA. A compositionally biased stretch (basic and acidic residues) spans 41 to 53 (LIEDARKEREKAE). The disordered stretch occupies residues 41 to 65 (LIEDARKEREKAEAASAASSEPGDL). Fe cation is bound by residues His328, His333, and Glu373. A Phosphoserine modification is found at Ser469.

The protein belongs to the biopterin-dependent aromatic amino acid hydroxylase family. Homotetramer. Interacts (when phosphorylated at Ser-19) with YWHAG; one YWHAG dimer bounds to one TH tetramer this interaction may influence the phosphorylation and dephosphorylation of other sites. It depends on Fe(2+) as a cofactor. Post-translationally, phosphorylated on Ser-19, Ser-31 and Ser-40 by several protein kinases with different site specificities. Phosphorylation at Ser-31 and Ser-40 leads to an increase of TH activity. Phosphorylation at Ser-40 activates the enzyme and also counteracts the feedback inhibition of TH by catecholamines. Phosphorylation of Ser-19 and Ser-31 triggers the proteasomal degradation of TH through the ubiquitin-proteasome pathway. Phosphorylation at Ser-31 facilitates transport of TH from the soma to the nerve terminals via the microtubule network. Phosphorylation at Ser-19 induces the high-affinity binding to the 14-3-3 protein YWHAG; this interaction may influence the phosphorylation and dephosphorylation of other sites. Ser-19 increases the phosphorylation at Ser-40 in a hierarchical manner, leading to increased activity.

The protein localises to the cytoplasm. Its subcellular location is the perinuclear region. The protein resides in the nucleus. It localises to the cell projection. It is found in the axon. The protein localises to the cytoplasmic vesicle. Its subcellular location is the secretory vesicle. The protein resides in the synaptic vesicle. The enzyme catalyses (6R)-L-erythro-5,6,7,8-tetrahydrobiopterin + L-tyrosine + O2 = (4aS,6R)-4a-hydroxy-L-erythro-5,6,7,8-tetrahydrobiopterin + L-dopa. The protein operates within catecholamine biosynthesis; dopamine biosynthesis; dopamine from L-tyrosine: step 1/2. Inhibited in feedback fashion by the catecholamine neurotransmitters, especially by dopamine in competition with tetrahydrobiopterin. Phosphorylation of several Ser/Thr residues in the N-terminus regulates the catalytic activity. Ser-31 and Ser-40 are readily phosphorylated to activate the catalytic activity. A Cysteine modification induced by N-ethylmaleimide (NEM), inhibits tyrosine 3-monooxygenase activity through the modification of the Cys-174. In terms of biological role, catalyzes the conversion of L-tyrosine to L-dihydroxyphenylalanine (L-Dopa), the rate-limiting step in the biosynthesis of cathecolamines, dopamine, noradrenaline, and adrenaline. Uses tetrahydrobiopterin and molecular oxygen to convert tyrosine to L-Dopa. In addition to tyrosine, is able to catalyze the hydroxylation of phenylalanine and tryptophan with lower specificity. Positively regulates the regression of retinal hyaloid vessels during postnatal development. The polypeptide is Tyrosine 3-monooxygenase (TH) (Canis lupus familiaris (Dog)).